A 78-amino-acid chain; its full sequence is Large ribosomal subunit protein bL28 (78 aa).

The protein belongs to the bacterial ribosomal protein bL28 family.

This is Large ribosomal subunit protein bL28 from Methylobacillus flagellatus (strain ATCC 51484 / DSM 6875 / VKM B-1610 / KT).